Consider the following 180-residue polypeptide: ATP synthase subunit delta (180 aa).

It belongs to the ATPase delta chain family. In terms of assembly, F-type ATPases have 2 components, F(1) - the catalytic core - and F(0) - the membrane proton channel. F(1) has five subunits: alpha(3), beta(3), gamma(1), delta(1), epsilon(1). F(0) has three main subunits: a(1), b(2) and c(10-14). The alpha and beta chains form an alternating ring which encloses part of the gamma chain. F(1) is attached to F(0) by a central stalk formed by the gamma and epsilon chains, while a peripheral stalk is formed by the delta and b chains.

The protein localises to the cell inner membrane. In terms of biological role, f(1)F(0) ATP synthase produces ATP from ADP in the presence of a proton or sodium gradient. F-type ATPases consist of two structural domains, F(1) containing the extramembraneous catalytic core and F(0) containing the membrane proton channel, linked together by a central stalk and a peripheral stalk. During catalysis, ATP synthesis in the catalytic domain of F(1) is coupled via a rotary mechanism of the central stalk subunits to proton translocation. Functionally, this protein is part of the stalk that links CF(0) to CF(1). It either transmits conformational changes from CF(0) to CF(1) or is implicated in proton conduction. This is ATP synthase subunit delta from Legionella pneumophila (strain Paris).